The primary structure comprises 342 residues: Phosphate acyltransferase (342 aa).

This sequence belongs to the PlsX family. In terms of assembly, homodimer. Probably interacts with PlsY.

The protein resides in the cytoplasm. It carries out the reaction a fatty acyl-[ACP] + phosphate = an acyl phosphate + holo-[ACP]. It participates in lipid metabolism; phospholipid metabolism. Its function is as follows. Catalyzes the reversible formation of acyl-phosphate (acyl-PO(4)) from acyl-[acyl-carrier-protein] (acyl-ACP). This enzyme utilizes acyl-ACP as fatty acyl donor, but not acyl-CoA. In Legionella pneumophila (strain Paris), this protein is Phosphate acyltransferase.